Reading from the N-terminus, the 459-residue chain is MNRLPSSASALACSAHALNLIEKRTLDHEEMKALNREVIEYFKEHVNPGFLEYRKSVTAGGDYGAVEWQAGGLNTLVDTQGQEFIDCLGGFGIFNVGHRNPVVVSAVQNQLAKQPLHSQELLDPLRAMLAKTLAALTPGKLKYSFFCNSGTESVEAALKLAKAYQSPRGKFTFIATSGAFHGKSLGALSATAKSTFRKPFMPLLPGFRHVPFGNIEAMRTALSECKKTGDDVAAVILEPIQGEGGVILPPPGYLTAVRKLCDEFGALMILDEVQTGMGRTGKMFACEHENVQPDILCLAKALGGGVMPIGATIATEEVFSVLFDNPFLHTTTFGGNPLACAAALATINVLLEQNLPAQAEQKGDMLLDGFRQLAREYPDLVQEARGKGMLMAIEFVDNEIGYNFASEMFRQRVLVAGTLNNAKTIRIEPPLTLTIEQCELVIKAARKALAAMRVSVEEA.

Pyridoxal 5'-phosphate contacts are provided by residues 150–151 (GT) and Gln-274. Residue Lys-300 is modified to N6-(pyridoxal phosphate)lysine. Thr-332 contacts pyridoxal 5'-phosphate.

Belongs to the class-III pyridoxal-phosphate-dependent aminotransferase family. Putrescine aminotransferase subfamily. The cofactor is pyridoxal 5'-phosphate.

The enzyme catalyses an alkane-alpha,omega-diamine + 2-oxoglutarate = an omega-aminoaldehyde + L-glutamate. It catalyses the reaction putrescine + 2-oxoglutarate = 1-pyrroline + L-glutamate + H2O. It carries out the reaction cadaverine + 2-oxoglutarate = 5-aminopentanal + L-glutamate. It participates in amine and polyamine degradation; putrescine degradation; 4-aminobutanal from putrescine (transaminase route): step 1/1. In terms of biological role, catalyzes the aminotransferase reaction from putrescine to 2-oxoglutarate, leading to glutamate and 4-aminobutanal, which spontaneously cyclizes to form 1-pyrroline. This is the first step in one of two pathways for putrescine degradation, where putrescine is converted into 4-aminobutanoate (gamma-aminobutyrate or GABA) via 4-aminobutanal. Also functions as a cadaverine transaminase in a a L-lysine degradation pathway to succinate that proceeds via cadaverine, glutarate and L-2-hydroxyglutarate. The sequence is that of Putrescine aminotransferase from Escherichia coli O17:K52:H18 (strain UMN026 / ExPEC).